The following is a 310-amino-acid chain: MKVGIVGSGMVGSATAYALALLGVAREVVLVDLDRKLAQAHAEDILHATPFAHPVWVRAGSYGDLEGARAVVLAAGVAQRPGETRLQLLDRNAQVFAQVVPRVLEAAPEAVLLVATNPVDVMTQVAYRLSGLPPGRVVGSGTILDTARFRALLAEHLRVAPQSVHAYVLGEHGDSEVLVWSSAQVGGVPLLEFAEARGRALSPEDRARIDEGVRRAAYRIIEGKGATYYGIGAGLARLVRAILTDEKGVYTVSAFTPEVEGVLEVSLSLPRILGAGGVEGTVYPSLSPEEREALRRSAEILKEAAFALGF.

NAD(+)-binding positions include valine 11, aspartate 32, tyrosine 62, and 76-77; that span reads GV. Substrate contacts are provided by residues glutamine 79, arginine 85, and 117–120; that span reads NPVD. Residues 115–117 and serine 140 contribute to the NAD(+) site; that span reads ATN. Substrate is bound at residue 145-148; sequence DTAR. Positions 150 and 165 each coordinate beta-D-fructose 1,6-bisphosphate. The Proton acceptor role is filled by histidine 172. Position 218 is a phosphotyrosine (tyrosine 218). Threonine 227 contacts substrate.

It belongs to the LDH/MDH superfamily. LDH family. Homotetramer.

Its subcellular location is the cytoplasm. It catalyses the reaction (S)-lactate + NAD(+) = pyruvate + NADH + H(+). It functions in the pathway fermentation; pyruvate fermentation to lactate; (S)-lactate from pyruvate: step 1/1. Allosterically activated by fructose 1,6-bisphosphate (FBP). Functionally, catalyzes the conversion of lactate to pyruvate. In Thermus thermophilus (strain ATCC BAA-163 / DSM 7039 / HB27), this protein is L-lactate dehydrogenase.